We begin with the raw amino-acid sequence, 124 residues long: Aspartate 1-decarboxylase (124 aa).

Serine 21 (schiff-base intermediate with substrate; via pyruvic acid) is an active-site residue. Serine 21 bears the Pyruvic acid (Ser) mark. Substrate is bound at residue threonine 53. Residue tyrosine 54 is the Proton donor of the active site. 69–71 (GAA) contributes to the substrate binding site.

The protein belongs to the PanD family. Heterooctamer of four alpha and four beta subunits. It depends on pyruvate as a cofactor. Is synthesized initially as an inactive proenzyme, which is activated by self-cleavage at a specific serine bond to produce a beta-subunit with a hydroxyl group at its C-terminus and an alpha-subunit with a pyruvoyl group at its N-terminus.

The protein resides in the cytoplasm. The enzyme catalyses L-aspartate + H(+) = beta-alanine + CO2. The protein operates within cofactor biosynthesis; (R)-pantothenate biosynthesis; beta-alanine from L-aspartate: step 1/1. Catalyzes the pyruvoyl-dependent decarboxylation of aspartate to produce beta-alanine. This is Aspartate 1-decarboxylase from Dehalococcoides mccartyi (strain CBDB1).